We begin with the raw amino-acid sequence, 153 residues long: NADPH-dependent 7-cyano-7-deazaguanine reductase (153 aa).

Residues 1–26 (MVKIHDGASQLGANVAAPRSPEEATL) are disordered. The active-site Thioimide intermediate is Cys51. Asp58 acts as the Proton donor in catalysis. Substrate-binding positions include 73-75 (VES) and 92-93 (HE).

Belongs to the GTP cyclohydrolase I family. QueF type 1 subfamily.

The protein localises to the cytoplasm. It carries out the reaction 7-aminomethyl-7-carbaguanine + 2 NADP(+) = 7-cyano-7-deazaguanine + 2 NADPH + 3 H(+). The protein operates within tRNA modification; tRNA-queuosine biosynthesis. In terms of biological role, catalyzes the NADPH-dependent reduction of 7-cyano-7-deazaguanine (preQ0) to 7-aminomethyl-7-deazaguanine (preQ1). The polypeptide is NADPH-dependent 7-cyano-7-deazaguanine reductase (Methylocella silvestris (strain DSM 15510 / CIP 108128 / LMG 27833 / NCIMB 13906 / BL2)).